The chain runs to 230 residues: Demethylmenaquinone methyltransferase (230 aa).

Residues T62, D80, 100–101 (DA), and S117 contribute to the S-adenosyl-L-methionine site.

Belongs to the class I-like SAM-binding methyltransferase superfamily. MenG/UbiE family.

The catalysed reaction is a 2-demethylmenaquinol + S-adenosyl-L-methionine = a menaquinol + S-adenosyl-L-homocysteine + H(+). The protein operates within quinol/quinone metabolism; menaquinone biosynthesis; menaquinol from 1,4-dihydroxy-2-naphthoate: step 2/2. Its function is as follows. Methyltransferase required for the conversion of demethylmenaquinol (DMKH2) to menaquinol (MKH2). This is Demethylmenaquinone methyltransferase from Mycobacterium sp. (strain KMS).